We begin with the raw amino-acid sequence, 124 residues long: Small ribosomal subunit protein uS13 (124 aa).

A disordered region spans residues 99–124 (RGQRTRTNARTRKGPRKTVGVMRKKS). Residues 101-124 (QRTRTNARTRKGPRKTVGVMRKKS) show a composition bias toward basic residues.

The protein belongs to the universal ribosomal protein uS13 family. In terms of assembly, part of the 30S ribosomal subunit. Forms a loose heterodimer with protein S19. Forms two bridges to the 50S subunit in the 70S ribosome.

Functionally, located at the top of the head of the 30S subunit, it contacts several helices of the 16S rRNA. In the 70S ribosome it contacts the 23S rRNA (bridge B1a) and protein L5 of the 50S subunit (bridge B1b), connecting the 2 subunits; these bridges are implicated in subunit movement. Contacts the tRNAs in the A and P-sites. The polypeptide is Small ribosomal subunit protein uS13 (Caldicellulosiruptor saccharolyticus (strain ATCC 43494 / DSM 8903 / Tp8T 6331)).